The following is a 510-amino-acid chain: Light-independent protochlorophyllide reductase subunit B (510 aa).

Asp-36 is a [4Fe-4S] cluster binding site. The active-site Proton donor is Asp-296. A substrate-binding site is contributed by 431–432 (GM).

Belongs to the ChlB/BchB/BchZ family. As to quaternary structure, protochlorophyllide reductase is composed of three subunits; ChlL, ChlN and ChlB. Forms a heterotetramer of two ChlB and two ChlN subunits. It depends on [4Fe-4S] cluster as a cofactor.

It is found in the plastid. The protein localises to the chloroplast. It carries out the reaction chlorophyllide a + oxidized 2[4Fe-4S]-[ferredoxin] + 2 ADP + 2 phosphate = protochlorophyllide a + reduced 2[4Fe-4S]-[ferredoxin] + 2 ATP + 2 H2O. It participates in porphyrin-containing compound metabolism; chlorophyll biosynthesis (light-independent). Its function is as follows. Component of the dark-operative protochlorophyllide reductase (DPOR) that uses Mg-ATP and reduced ferredoxin to reduce ring D of protochlorophyllide (Pchlide) to form chlorophyllide a (Chlide). This reaction is light-independent. The NB-protein (ChlN-ChlB) is the catalytic component of the complex. The chain is Light-independent protochlorophyllide reductase subunit B from Physcomitrium patens (Spreading-leaved earth moss).